We begin with the raw amino-acid sequence, 173 residues long: MDIAIQHPWFKRALGPFYPNRLFDQVFGEGMFDYDLFPFLSSTVSPYYRHSLFRGFMDSGISEVRSDRDRFTINLDVKHFSPDDLTVKILDDFVEIHGKHSERQDDHGYISREFHRRYRLPSNLDQSSISCSLSADGILTFSGPKMMSGLDSSHSERPIPVSREEKPTSAPSS.

Position 1 is an N-acetylmethionine (Met-1). In terms of domain architecture, sHSP spans 52–162; the sequence is LFRGFMDSGI…SHSERPIPVS (111 aa). The Zn(2+) site is built by His-100, Glu-102, His-107, and His-154. Residues 146–173 form a disordered region; the sequence is MMSGLDSSHSERPIPVSREEKPTSAPSS. Basic and acidic residues predominate over residues 153–167; it reads SHSERPIPVSREEKP.

This sequence belongs to the small heat shock protein (HSP20) family. Heteropolymer composed of three CRYAA and one CRYAB subunits. Inter-subunit bridging via zinc ions enhances stability, which is crucial as there is no protein turn over in the lens. Can also form homodimers and homotetramers (dimers of dimers) which serve as the building blocks of homooligomers. Within homooligomers, the zinc-binding motif is created from residues of 3 different molecules. His-100 and Glu-102 from one molecule are ligands of the zinc ion, and His-107 and His-154 residues from additional molecules complete the site with tetrahedral coordination geometry.

It is found in the cytoplasm. It localises to the nucleus. Functionally, contributes to the transparency and refractive index of the lens. May act as a chaperone, preventing aggregation of various proteins under a wide range of stress conditions. This is Alpha-crystallin A chain (CRYAA) from Aquarana catesbeiana (American bullfrog).